A 379-amino-acid chain; its full sequence is MGCFGSAGAKGDAEENKKRKEANKNINKQIQKDKQVYRATHRLLLLGAGESGKSTIVKQMRILHVDGFSEEEKREKIHAIRCNIRDAILTITGNMSTLTPPIALENPAHQFRVDYIQDVASQKDFDYPEEFYEHTEMLWKDKGVQACYERANEYQLIDCAKYFLDRVHIVRQTDYTPTEQDILRCRVLTLGIFETRFQVDKVNFHMFDVGGQRDERRKWIQCFNDVTAIIFVTACSSYNMVLREDPSQNRLRESLDLFKSIWNNRWLRTISVILFLNKQDLLAEKIRAGKSKLEDYFPDFARYQTPLDATVEPGEDPEVVRAKYFIRDEFLRISTASGDGKHYCYPHFTCAVDTENIRRVFNDCRDIIQRMHLRQYELL.

Positions 1–29 (MGCFGSAGAKGDAEENKKRKEANKNINKQ) are disordered. The N-palmitoyl glycine moiety is linked to residue G2. C3 carries the S-palmitoyl cysteine lipid modification. Positions 39-379 (ATHRLLLLGA…RMHLRQYELL (341 aa)) constitute a G-alpha domain. The interval 42–55 (RLLLLGAGESGKST) is G1 motif. GTP contacts are provided by residues 47–54 (GAGESGKS), 183–189 (LRCRVLT), 208–212 (DVGGQ), 277–280 (NKQD), and A351. Mg(2+) is bound by residues S54 and T189. Residues 181 to 189 (DILRCRVLT) form a G2 motif region. A G3 motif region spans residues 204–213 (FHMFDVGGQR). The G4 motif stretch occupies residues 273–280 (ILFLNKQD). A G5 motif region spans residues 349–354 (TCAVDT).

Belongs to the G-alpha family. G(s) subfamily. G proteins are composed of 3 units; alpha, beta and gamma. The alpha chain contains the guanine nucleotide binding site.

Its function is as follows. Guanine nucleotide-binding proteins (G proteins) are involved as modulators or transducers in various transmembrane signaling systems. The G(s) protein is involved in hormonal regulation of adenylate cyclase: it activates the cyclase in response to beta-adrenergic stimuli. This is Guanine nucleotide-binding protein G(s) subunit alpha from Homarus americanus (American lobster).